A 264-amino-acid polypeptide reads, in one-letter code: Thymidylate synthase (264 aa).

R21 lines the dUMP pocket. H51 lines the (6R)-5,10-methylene-5,6,7,8-tetrahydrofolate pocket. R126–R127 contributes to the dUMP binding site. C146 acts as the Nucleophile in catalysis. Residues R166–D169, N177, and H207–Y209 contribute to the dUMP site. D169 is a binding site for (6R)-5,10-methylene-5,6,7,8-tetrahydrofolate. Position 263 (A263) interacts with (6R)-5,10-methylene-5,6,7,8-tetrahydrofolate.

Belongs to the thymidylate synthase family. Bacterial-type ThyA subfamily. As to quaternary structure, homodimer.

The protein resides in the cytoplasm. It catalyses the reaction dUMP + (6R)-5,10-methylene-5,6,7,8-tetrahydrofolate = 7,8-dihydrofolate + dTMP. Its pathway is pyrimidine metabolism; dTTP biosynthesis. Functionally, catalyzes the reductive methylation of 2'-deoxyuridine-5'-monophosphate (dUMP) to 2'-deoxythymidine-5'-monophosphate (dTMP) while utilizing 5,10-methylenetetrahydrofolate (mTHF) as the methyl donor and reductant in the reaction, yielding dihydrofolate (DHF) as a by-product. This enzymatic reaction provides an intracellular de novo source of dTMP, an essential precursor for DNA biosynthesis. In Shewanella denitrificans (strain OS217 / ATCC BAA-1090 / DSM 15013), this protein is Thymidylate synthase.